Consider the following 420-residue polypeptide: Phytoene synthase 1, chloroplastic (420 aa).

The transit peptide at 1–70 directs the protein to the chloroplast; it reads MAAITLLRSA…GEIARTSPVY (70 aa).

It belongs to the phytoene/squalene synthase family. Expressed in leaves. Highly expressed in developing leaves. Expressed at low levels in roots.

The protein resides in the plastid. The protein localises to the chloroplast membrane. It localises to the chloroplast. Its subcellular location is the plastoglobule. It carries out the reaction 2 (2E,6E,10E)-geranylgeranyl diphosphate = 15-cis-phytoene + 2 diphosphate. Functionally, catalyzes the conversion of geranylgeranyl diphosphate to phytoene. Mediates the first committed step in carotenoid biosynthesis. This is Phytoene synthase 1, chloroplastic from Oryza sativa subsp. japonica (Rice).